An 89-amino-acid polypeptide reads, in one-letter code: UPF0147 protein Msed_2034 (89 aa).

It belongs to the UPF0147 family.

The protein is UPF0147 protein Msed_2034 of Metallosphaera sedula (strain ATCC 51363 / DSM 5348 / JCM 9185 / NBRC 15509 / TH2).